The chain runs to 472 residues: Glutamate--tRNA ligase 2 (472 aa).

Positions 10 to 20 match the 'HIGH' region motif; the sequence is PSPTGYLHIGG. Zn(2+)-binding residues include cysteine 99, cysteine 101, cysteine 126, and aspartate 128. Residues 112–130 show a composition bias toward basic and acidic residues; it reads EQQARKEKPRYDGRCRDLD. Positions 112-137 are disordered; that stretch reads EQQARKEKPRYDGRCRDLDGPPSEEV. The 'KMSKS' region motif lies at 240-244; that stretch reads RLSKR. Lysine 243 lines the ATP pocket.

The protein belongs to the class-I aminoacyl-tRNA synthetase family. Glutamate--tRNA ligase type 1 subfamily. In terms of assembly, monomer. Zn(2+) is required as a cofactor.

Its subcellular location is the cytoplasm. The catalysed reaction is tRNA(Glu) + L-glutamate + ATP = L-glutamyl-tRNA(Glu) + AMP + diphosphate. Catalyzes the attachment of glutamate to tRNA(Glu) in a two-step reaction: glutamate is first activated by ATP to form Glu-AMP and then transferred to the acceptor end of tRNA(Glu). This Halorhodospira halophila (strain DSM 244 / SL1) (Ectothiorhodospira halophila (strain DSM 244 / SL1)) protein is Glutamate--tRNA ligase 2.